Consider the following 185-residue polypeptide: Crossover junction endodeoxyribonuclease RuvC (185 aa).

Catalysis depends on residues D7, E68, and D141. Residues D7, E68, and D141 each coordinate Mg(2+).

This sequence belongs to the RuvC family. As to quaternary structure, homodimer which binds Holliday junction (HJ) DNA. The HJ becomes 2-fold symmetrical on binding to RuvC with unstacked arms; it has a different conformation from HJ DNA in complex with RuvA. In the full resolvosome a probable DNA-RuvA(4)-RuvB(12)-RuvC(2) complex forms which resolves the HJ. Mg(2+) serves as cofactor.

The protein localises to the cytoplasm. The catalysed reaction is Endonucleolytic cleavage at a junction such as a reciprocal single-stranded crossover between two homologous DNA duplexes (Holliday junction).. Functionally, the RuvA-RuvB-RuvC complex processes Holliday junction (HJ) DNA during genetic recombination and DNA repair. Endonuclease that resolves HJ intermediates. Cleaves cruciform DNA by making single-stranded nicks across the HJ at symmetrical positions within the homologous arms, yielding a 5'-phosphate and a 3'-hydroxyl group; requires a central core of homology in the junction. The consensus cleavage sequence is 5'-(A/T)TT(C/G)-3'. Cleavage occurs on the 3'-side of the TT dinucleotide at the point of strand exchange. HJ branch migration catalyzed by RuvA-RuvB allows RuvC to scan DNA until it finds its consensus sequence, where it cleaves and resolves the cruciform DNA. The sequence is that of Crossover junction endodeoxyribonuclease RuvC from Helicobacter hepaticus (strain ATCC 51449 / 3B1).